A 216-amino-acid chain; its full sequence is Probable nicotinate-nucleotide adenylyltransferase (216 aa).

This sequence belongs to the NadD family.

It carries out the reaction nicotinate beta-D-ribonucleotide + ATP + H(+) = deamido-NAD(+) + diphosphate. Its pathway is cofactor biosynthesis; NAD(+) biosynthesis; deamido-NAD(+) from nicotinate D-ribonucleotide: step 1/1. In terms of biological role, catalyzes the reversible adenylation of nicotinate mononucleotide (NaMN) to nicotinic acid adenine dinucleotide (NaAD). The protein is Probable nicotinate-nucleotide adenylyltransferase of Marinobacter nauticus (strain ATCC 700491 / DSM 11845 / VT8) (Marinobacter aquaeolei).